The following is a 179-amino-acid chain: Large ribosomal subunit protein uL5 (179 aa).

This sequence belongs to the universal ribosomal protein uL5 family. As to quaternary structure, part of the 50S ribosomal subunit; part of the 5S rRNA/L5/L18/L25 subcomplex. Contacts the 5S rRNA and the P site tRNA. Forms a bridge to the 30S subunit in the 70S ribosome.

Its function is as follows. This is one of the proteins that bind and probably mediate the attachment of the 5S RNA into the large ribosomal subunit, where it forms part of the central protuberance. In the 70S ribosome it contacts protein S13 of the 30S subunit (bridge B1b), connecting the 2 subunits; this bridge is implicated in subunit movement. Contacts the P site tRNA; the 5S rRNA and some of its associated proteins might help stabilize positioning of ribosome-bound tRNAs. The sequence is that of Large ribosomal subunit protein uL5 from Trichlorobacter lovleyi (strain ATCC BAA-1151 / DSM 17278 / SZ) (Geobacter lovleyi).